We begin with the raw amino-acid sequence, 204 residues long: Guanylate kinase (204 aa).

Residues 4–182 (GLLYVISAPS…ALNQLRAIVQ (179 aa)) enclose the Guanylate kinase-like domain. 11–18 (APSGAGKT) provides a ligand contact to ATP.

It belongs to the guanylate kinase family.

The protein resides in the cytoplasm. The catalysed reaction is GMP + ATP = GDP + ADP. Its function is as follows. Essential for recycling GMP and indirectly, cGMP. The chain is Guanylate kinase from Methylococcus capsulatus (strain ATCC 33009 / NCIMB 11132 / Bath).